We begin with the raw amino-acid sequence, 725 residues long: Ribonuclease R (725 aa).

The 324-residue stretch at 236–559 (RKDLRDKLII…QLHRLIKQMV (324 aa)) folds into the RNB domain. An S1 motif domain is found at 611 to 689 (GKSLKAQIVS…NLGKVDVVLE (79 aa)).

Belongs to the RNR ribonuclease family. RNase R subfamily.

The protein resides in the cytoplasm. The enzyme catalyses Exonucleolytic cleavage in the 3'- to 5'-direction to yield nucleoside 5'-phosphates.. 3'-5' exoribonuclease that releases 5'-nucleoside monophosphates and is involved in maturation of structured RNAs. This is Ribonuclease R from Mycoplasmopsis pulmonis (strain UAB CTIP) (Mycoplasma pulmonis).